Reading from the N-terminus, the 131-residue chain is Fumarate reductase subunit C (131 aa).

Helical transmembrane passes span 30–50 (EGTA…LFAL), 63–83 (FLQN…ALLH), and 109–129 (IIKS…FVAL).

It belongs to the FrdC family. In terms of assembly, part of an enzyme complex containing four subunits: a flavoprotein (FrdA), an iron-sulfur protein (FrdB), and two hydrophobic anchor proteins (FrdC and FrdD).

The protein localises to the cell inner membrane. Functionally, two distinct, membrane-bound, FAD-containing enzymes are responsible for the catalysis of fumarate and succinate interconversion; fumarate reductase is used in anaerobic growth, and succinate dehydrogenase is used in aerobic growth. Anchors the catalytic components of the fumarate reductase complex to the cell inner membrane, binds quinones. The chain is Fumarate reductase subunit C from Escherichia coli O17:K52:H18 (strain UMN026 / ExPEC).